Consider the following 386-residue polypeptide: Putative F-box/kelch-repeat protein At4g11750 (386 aa).

Residues Pro-5–Arg-51 enclose the F-box domain. 3 Kelch repeats span residues Lys-187–Gly-236, Leu-238–Ser-285, and Val-287–Gly-324.

This is Putative F-box/kelch-repeat protein At4g11750 from Arabidopsis thaliana (Mouse-ear cress).